Consider the following 357-residue polypeptide: Acidic fibroblast growth factor intracellular-binding protein (357 aa).

Thr-2 is modified (N-acetylthreonine).

Binds to internalized FGF1; this interaction is increased in the presence of CSNKB, suggesting a possible cooperative interaction between CSNKB and FIBP in binding to FGF1.

Its subcellular location is the nucleus. It localises to the endomembrane system. Its function is as follows. May be involved in mitogenic function of FGF1. May mediate with IER2 FGF-signaling in the establishment of laterality in the embryo. The protein is Acidic fibroblast growth factor intracellular-binding protein (FIBP) of Chlorocebus aethiops (Green monkey).